A 125-amino-acid chain; its full sequence is Protein ELF4-LIKE 1 (125 aa).

Residues methionine 1–methionine 18 show a composition bias toward polar residues. The disordered stretch occupies residues methionine 1 to alanine 28.

Belongs to the EARLY FLOWERING 4 family. Homodimer.

It localises to the nucleus. In terms of biological role, component of the central CCA1/LHY-TOC1 feedback loop in the circadian clock that promotes clock accuracy and is required for sustained rhythms in the absence of daily light/dark cycles. The protein is Protein ELF4-LIKE 1 (EFL1) of Arabidopsis thaliana (Mouse-ear cress).